Here is a 329-residue protein sequence, read N- to C-terminus: Minor capsid protein A1 (329 aa).

The tract at residues 143-162 (GPSPVPGPNPDPPLEPPPGT) is disordered. The span at 145-161 (SPVPGPNPDPPLEPPPG) shows a compositional bias: pro residues.

The protein resides in the virion. Functionally, minor capsid protein. This chain is Minor capsid protein A1, found in Qbeta virus (strain MX1).